A 367-amino-acid polypeptide reads, in one-letter code: uncharacterized protein (367 aa).

The ABC transporter domain maps to 4–234 (LTFEHVKKSY…PANLFVAGFI (231 aa)). 36 to 43 (GPSGCGKS) contacts ATP.

The protein belongs to the ABC transporter superfamily.

This is an uncharacterized protein from Bacillus subtilis (strain 168).